A 227-amino-acid polypeptide reads, in one-letter code: Cytochrome c oxidase subunit 2 (227 aa).

At 1 to 14 the chain is on the mitochondrial intermembrane side; that stretch reads MAYPMQLGLQDATS. Residues 15–45 traverse the membrane as a helical segment; it reads PIMEELMNFHDHTLMIVFLISSLVLYLISLM. The Mitochondrial matrix segment spans residues 46–59; sequence LTTKLIHTNTMDAQ. A helical membrane pass occupies residues 60–87; it reads EVETIWTILPAIILVLIALPSLRILYMM. Residues 88–227 lie on the Mitochondrial intermembrane side of the membrane; that stretch reads DEINNPVLTV…FFENWSSSMT (140 aa). H161, C196, E198, C200, H204, and M207 together coordinate Cu cation. E198 is a Mg(2+) binding site.

The protein belongs to the cytochrome c oxidase subunit 2 family. In terms of assembly, component of the cytochrome c oxidase (complex IV, CIV), a multisubunit enzyme composed of 14 subunits. The complex is composed of a catalytic core of 3 subunits MT-CO1, MT-CO2 and MT-CO3, encoded in the mitochondrial DNA, and 11 supernumerary subunits COX4I, COX5A, COX5B, COX6A, COX6B, COX6C, COX7A, COX7B, COX7C, COX8 and NDUFA4, which are encoded in the nuclear genome. The complex exists as a monomer or a dimer and forms supercomplexes (SCs) in the inner mitochondrial membrane with NADH-ubiquinone oxidoreductase (complex I, CI) and ubiquinol-cytochrome c oxidoreductase (cytochrome b-c1 complex, complex III, CIII), resulting in different assemblies (supercomplex SCI(1)III(2)IV(1) and megacomplex MCI(2)III(2)IV(2)). Found in a complex with TMEM177, COA6, COX18, COX20, SCO1 and SCO2. Interacts with TMEM177 in a COX20-dependent manner. Interacts with COX20. Interacts with COX16. It depends on Cu cation as a cofactor.

It is found in the mitochondrion inner membrane. The enzyme catalyses 4 Fe(II)-[cytochrome c] + O2 + 8 H(+)(in) = 4 Fe(III)-[cytochrome c] + 2 H2O + 4 H(+)(out). Its function is as follows. Component of the cytochrome c oxidase, the last enzyme in the mitochondrial electron transport chain which drives oxidative phosphorylation. The respiratory chain contains 3 multisubunit complexes succinate dehydrogenase (complex II, CII), ubiquinol-cytochrome c oxidoreductase (cytochrome b-c1 complex, complex III, CIII) and cytochrome c oxidase (complex IV, CIV), that cooperate to transfer electrons derived from NADH and succinate to molecular oxygen, creating an electrochemical gradient over the inner membrane that drives transmembrane transport and the ATP synthase. Cytochrome c oxidase is the component of the respiratory chain that catalyzes the reduction of oxygen to water. Electrons originating from reduced cytochrome c in the intermembrane space (IMS) are transferred via the dinuclear copper A center (CU(A)) of subunit 2 and heme A of subunit 1 to the active site in subunit 1, a binuclear center (BNC) formed by heme A3 and copper B (CU(B)). The BNC reduces molecular oxygen to 2 water molecules using 4 electrons from cytochrome c in the IMS and 4 protons from the mitochondrial matrix. In Desmodillus auricularis (Cape short-eared gerbil), this protein is Cytochrome c oxidase subunit 2 (MT-CO2).